We begin with the raw amino-acid sequence, 75 residues long: MSVQDKQGQNINVGDTVYTPYRGGKHEGQVADIVTTKEEAAEKGVKNPPKVLFTDQNNKDVAHNPGTLTDLDKQK.

The span at 1-13 (MSVQDKQGQNINV) shows a compositional bias: polar residues. Disordered stretches follow at residues 1 to 24 (MSVQ…YRGG) and 40 to 75 (AAEK…DKQK).

May play a role in primary metabolism. This is Putative primary metabolism protein HVA1 from Cryptococcus neoformans var. grubii serotype A (strain H99 / ATCC 208821 / CBS 10515 / FGSC 9487) (Filobasidiella neoformans var. grubii).